The chain runs to 198 residues: tRNA (cytidine(56)-2'-O)-methyltransferase (198 aa).

Residues Leu-81, 110–114 (GAEKV), and 128–135 (IGNQPHSE) contribute to the S-adenosyl-L-methionine site. Residues 178–198 (DAKQAEASGEGASRKNGQLPS) are disordered.

Belongs to the aTrm56 family. Homodimer.

Its subcellular location is the cytoplasm. It catalyses the reaction cytidine(56) in tRNA + S-adenosyl-L-methionine = 2'-O-methylcytidine(56) in tRNA + S-adenosyl-L-homocysteine + H(+). In terms of biological role, specifically catalyzes the AdoMet-dependent 2'-O-ribose methylation of cytidine at position 56 in tRNAs. This is tRNA (cytidine(56)-2'-O)-methyltransferase from Pyrococcus abyssi (strain GE5 / Orsay).